A 169-amino-acid chain; its full sequence is Desumoylating isopeptidase 1 (169 aa).

In terms of domain architecture, PPPDE spans 8 to 150 (HLVRLYVYDM…LGQALRPLLD (143 aa)). Residue His-39 is part of the active site. The Nuclear export signal 1 signature appears at 84–92 (IFLEYLSSL). The active site involves Cys-109. Residues 140–154 (PLGQALRPLLDSVQI) carry the Nuclear export signal 2 motif.

It belongs to the DeSI family. As to quaternary structure, homodimer.

The protein resides in the cytoplasm. Its subcellular location is the nucleus. The enzyme catalyses S-hexadecanoyl-L-cysteinyl-[protein] + H2O = L-cysteinyl-[protein] + hexadecanoate + H(+). Its function is as follows. Protease which deconjugates SUMO1, SUMO2 and SUMO3 from some substrate proteins. Has isopeptidase but not SUMO-processing activity. Collaborates with ubqln4 in the export of ubiquitinated proteins from the nucleus to the cytoplasm. Exhibits palmitoyl protein thioesterase (S-depalmitoylation) activity towards synthetic substrates 4-methylumbelliferyl-6-S-palmitoyl-beta-D-glucopyranoside and S-depalmitoylation probe 5 (DPP-5). In Xenopus laevis (African clawed frog), this protein is Desumoylating isopeptidase 1.